The chain runs to 319 residues: Acetyl esterase (319 aa).

Residues 91–93 carry the Involved in the stabilization of the negatively charged intermediate by the formation of the oxyanion hole motif; that stretch reads HGG. Residues S165, D262, and H292 contribute to the active site.

Belongs to the 'GDXG' lipolytic enzyme family. In terms of assembly, homodimer. Interacts with MalT and MelA.

Its subcellular location is the cytoplasm. Displays esterase activity towards short chain fatty esters (acyl chain length of up to 8 carbons). Able to hydrolyze triacetylglycerol (triacetin) and tributyrylglycerol (tributyrin), but not trioleylglycerol (triolein) or cholesterol oleate. Negatively regulates MalT activity by antagonizing maltotriose binding. Inhibits MelA galactosidase activity. This Escherichia coli O7:K1 (strain IAI39 / ExPEC) protein is Acetyl esterase.